Reading from the N-terminus, the 302-residue chain is Deubiquitinase OTUD6B (302 aa).

Over residues 1–10 (MEGSEDEEAE) the composition is skewed to acidic residues. Disordered stretches follow at residues 1–52 (MEGS…KQLA) and 99–121 (EQQIQHPRISKAQKRREKKAALE). A compositionally biased stretch (basic residues) spans 106–116 (RISKAQKRREK). In terms of domain architecture, OTU spans 156–293 (LEIKQIPSDG…GEHYNSVKLL (138 aa)). Residues 161 to 167 (IPSDGHC) form a cys-loop region. Residue Asp-164 is part of the active site. The active-site Nucleophile is the Cys-167. The interval 228–238 (IANTAAWGGQL) is variable-loop. Residues 276 to 286 (YMRHAYGLGEH) are his-loop. Residue His-286 is part of the active site.

The catalysed reaction is Thiol-dependent hydrolysis of ester, thioester, amide, peptide and isopeptide bonds formed by the C-terminal Gly of ubiquitin (a 76-residue protein attached to proteins as an intracellular targeting signal).. Functionally, deubiquitinating enzyme that may play a role in the ubiquitin-dependent regulation of different cellular processes. The polypeptide is Deubiquitinase OTUD6B (OTUD6B) (Gallus gallus (Chicken)).